A 190-amino-acid polypeptide reads, in one-letter code: RNA pyrophosphohydrolase (190 aa).

Positions 6–149 constitute a Nudix hydrolase domain; that stretch reads GYRPNVGIVL…KRGVYARALC (144 aa). The Nudix box signature appears at 38 to 59; the sequence is GGMHSDETPVEAMYRELNEETG.

This sequence belongs to the Nudix hydrolase family. RppH subfamily. It depends on a divalent metal cation as a cofactor.

In terms of biological role, accelerates the degradation of transcripts by removing pyrophosphate from the 5'-end of triphosphorylated RNA, leading to a more labile monophosphorylated state that can stimulate subsequent ribonuclease cleavage. In Xylella fastidiosa (strain 9a5c), this protein is RNA pyrophosphohydrolase.